The primary structure comprises 99 residues: Large ribosomal subunit protein uL23 (99 aa).

It belongs to the universal ribosomal protein uL23 family. In terms of assembly, part of the 50S ribosomal subunit. Contacts protein L29, and trigger factor when it is bound to the ribosome.

Its function is as follows. One of the early assembly proteins it binds 23S rRNA. One of the proteins that surrounds the polypeptide exit tunnel on the outside of the ribosome. Forms the main docking site for trigger factor binding to the ribosome. This chain is Large ribosomal subunit protein uL23, found in Francisella philomiragia subsp. philomiragia (strain ATCC 25017 / CCUG 19701 / FSC 153 / O#319-036).